We begin with the raw amino-acid sequence, 742 residues long: Zinc finger protein 700 (742 aa).

Residues 1–20 are disordered; that stretch reads MPCCSHRSCREDPGTSESRE. The segment covering 8-20 has biased composition (basic and acidic residues); the sequence is SCREDPGTSESRE. Residues 24–104 form the KRAB domain; that stretch reads VAFEDVAVNF…KEDSHCGETF (81 aa). 9 C2H2-type zinc fingers span residues 194–216, 222–244, 250–272, 278–300, 306–328, 362–384, 390–412, 418–440, and 446–468; these read YACKVCGKTFIFHSSIRRHMVMH, YKCKFCGKAFHSFSLYLIHERTH, YECKQCGKSFTYSATLQIHERTH, YECSKCDKAFHSSSSYHRHERSH, YQCKECGKAFAYTSSLRRHERTH, YKCKICGKGFYSAKSFQTHEKTH, YKCKQCGKAFNLSSSFRYHERIH, YECKQCGKAFRSASQLRVHGGTH, and YECKECGKAFRSTSHLRVHGRTH. The C2H2-type 10; degenerate zinc finger occupies 474 to 502; it reads YECKECGKAFRYVKHLQIHERTEKHIRMP. 8 C2H2-type zinc fingers span residues 508 to 530, 536 to 558, 564 to 586, 592 to 614, 620 to 642, 648 to 670, 676 to 698, and 704 to 726; these read YKCSICEKGFYSAKSFQTHEKTH, YECNQCGKAFRCCNSLRYHERTH, YECKQCGKAFRSASHLRMHERTH, YECKQCGKAFSCASNLRKHGRTH, YECKQCGKAFRSASNLQMHERTH, YECKECEKAFCKFSSFQIHERKH, YECKHCGNGFTSAKILQIHARTH, and YECKECGKAFNYFSSLHIHARTH.

It belongs to the krueppel C2H2-type zinc-finger protein family.

Its subcellular location is the nucleus. May be involved in transcriptional regulation. The chain is Zinc finger protein 700 (ZNF700) from Homo sapiens (Human).